The sequence spans 209 residues: HTLV-1 basic zipper factor (209 aa).

The segment at Asp48 to Leu162 is disordered. Basic and acidic residues-rich tracts occupy residues Ala70–Lys87 and Arg94–Ala114. Residues Lys87 to Lys92 carry the Nuclear localization signal 1 motif. Short sequence motifs (nuclear localization signal) lie at residues Arg116–Ala120 and Arg137–Lys141. Basic and acidic residues predominate over residues Lys122–Gln160.

This sequence belongs to the HTLV-1 HBZ protein family. In terms of assembly, interacts with host ATF4; this interaction inhibits viral RNA transcriptional activation by preventing ATF4 binding to Tax-responsive elements. Interacts with host CREB1; this interaction inhibits host CREB1 transcriptional activity. Interacts with host JUN, JUNB and JUND. Interacts with host EP300.

The protein localises to the host nucleus. Contributes to the regulation of viral RNA transcription by interacting with host proteins involved in transcriptional activation such as ATF4, or CREB1, and by inhibiting their activity. Additionally, HBZ suppresses host NF-kappa-B-driven transcription mediated by host RELA as well as transcription of some classical NF-kappa-B target genes, including IL8, IL2RA, IRF4, VCAM1, and VEGFA. The sequence is that of HTLV-1 basic zipper factor (HBZ) from Homo sapiens (Human).